Reading from the N-terminus, the 1755-residue chain is Transposon Ty1-ML1 Gag-Pol polyprotein (1755 aa).

3 stretches are compositionally biased toward polar residues: residues 1–23, 48–60, and 127–152; these read MESQ…SVTS, TKAN…TPAS, and QSQF…GNTF. Disordered stretches follow at residues 1–88, 126–173, and 352–421; these read MESQ…YPQQ, PQSQ…RPPP, and GSRN…SKST. Residues 153–165 are compositionally biased toward low complexity; sequence TDSSSADSDMTST. The interval 299–401 is RNA-binding; that stretch reads NNGIHINNKV…NSKSKTARAH (103 aa). The span at 402-418 shows a compositional bias: low complexity; sequence NVSTSNNSPSTDNDSIS. Aspartate 461 serves as the catalytic For protease activity; shared with dimeric partner. The interval 583–640 is integrase-type zinc finger-like; it reads NVHTSESTRKYPYPFIHRMLAHANAQTIRYSLKNNTITYFNESDVDWSSAIDYQCPDC. Positions 660–835 constitute an Integrase catalytic domain; that stretch reads NSYEPFQYLH…AGLDISTLLP (176 aa). 2 residues coordinate Mg(2+): aspartate 671 and aspartate 736. 3 disordered regions span residues 956-1087, 1092-1111, and 1130-1171; these read SKAV…ETEK, RSPS…NIVP, and DLPL…DSNA. A compositionally biased stretch (low complexity) spans 960 to 969; that stretch reads SPTDSTPPST. Positions 1005 to 1015 are enriched in polar residues; sequence STPQISNIEST. The segment covering 1038-1053 has biased composition (basic and acidic residues); it reads ESSHASKSKDFRHSDS. 2 stretches are compositionally biased toward polar residues: residues 1054-1082 and 1101-1111; these read YSEN…QISD and PENNSSHNIVP. Positions 1178 to 1212 match the Bipartite nuclear localization signal motif; sequence KKRSLEDNETEIKVSRDTWNTKNMRSLEPPRSKKR. Positions 1338–1476 constitute a Reverse transcriptase Ty1/copia-type domain; the sequence is NNYYITQLDI…DILGLEIKYQ (139 aa). Mg(2+) is bound by residues aspartate 1346, aspartate 1427, aspartate 1428, aspartate 1610, glutamate 1652, and aspartate 1685. An RNase H Ty1/copia-type domain is found at 1610–1752; that stretch reads DASYGNQPYY…IKTFKLLTNK (143 aa).

As to quaternary structure, the capsid protein forms a homotrimer, from which the VLPs are assembled. The protease is a homodimer, whose active site consists of two apposed aspartic acid residues. Initially, virus-like particles (VLPs) are composed of the structural unprocessed proteins Gag and Gag-Pol, and also contain the host initiator methionine tRNA (tRNA(i)-Met) which serves as a primer for minus-strand DNA synthesis, and a dimer of genomic Ty RNA. Processing of the polyproteins occurs within the particle and proceeds by an ordered pathway, called maturation. First, the protease (PR) is released by autocatalytic cleavage of the Gag-Pol polyprotein yielding capsid protein p45 and a Pol-p154 precursor protein. This cleavage is a prerequisite for subsequent processing of Pol-p154 at the remaining sites to release the mature structural and catalytic proteins. Maturation takes place prior to the RT reaction and is required to produce transposition-competent VLPs.

Its subcellular location is the cytoplasm. It is found in the nucleus. It carries out the reaction DNA(n) + a 2'-deoxyribonucleoside 5'-triphosphate = DNA(n+1) + diphosphate. The enzyme catalyses Endonucleolytic cleavage to 5'-phosphomonoester.. Its function is as follows. Capsid protein (CA) is the structural component of the virus-like particle (VLP), forming the shell that encapsulates the retrotransposons dimeric RNA genome. The particles are assembled from trimer-clustered units and there are holes in the capsid shells that allow for the diffusion of macromolecules. CA also has nucleocapsid-like chaperone activity, promoting primer tRNA(i)-Met annealing to the multipartite primer-binding site (PBS), dimerization of Ty1 RNA and initiation of reverse transcription. The aspartyl protease (PR) mediates the proteolytic cleavages of the Gag and Gag-Pol polyproteins after assembly of the VLP. In terms of biological role, reverse transcriptase/ribonuclease H (RT) is a multifunctional enzyme that catalyzes the conversion of the retro-elements RNA genome into dsDNA within the VLP. The enzyme displays a DNA polymerase activity that can copy either DNA or RNA templates, and a ribonuclease H (RNase H) activity that cleaves the RNA strand of RNA-DNA heteroduplexes during plus-strand synthesis and hydrolyzes RNA primers. The conversion leads to a linear dsDNA copy of the retrotransposon that includes long terminal repeats (LTRs) at both ends. Functionally, integrase (IN) targets the VLP to the nucleus, where a subparticle preintegration complex (PIC) containing at least integrase and the newly synthesized dsDNA copy of the retrotransposon must transit the nuclear membrane. Once in the nucleus, integrase performs the integration of the dsDNA into the host genome. The chain is Transposon Ty1-ML1 Gag-Pol polyprotein (TY1B-ML1) from Saccharomyces cerevisiae (strain ATCC 204508 / S288c) (Baker's yeast).